The sequence spans 56 residues: Small ribosomal subunit protein uS14 (56 aa).

This sequence belongs to the universal ribosomal protein uS14 family. As to quaternary structure, component of the small ribosomal subunit (SSU). Mature yeast ribosomes consist of a small (40S) and a large (60S) subunit. The 40S small subunit contains 1 molecule of ribosomal RNA (18S rRNA) and at least 33 different proteins. The large 60S subunit contains 3 rRNA molecules (25S, 5.8S and 5S rRNA) and at least 46 different proteins.

It is found in the cytoplasm. Its subcellular location is the nucleus. Functionally, component of the ribosome, a large ribonucleoprotein complex responsible for the synthesis of proteins in the cell. The small ribosomal subunit (SSU) binds messenger RNAs (mRNAs) and translates the encoded message by selecting cognate aminoacyl-transfer RNA (tRNA) molecules. The large subunit (LSU) contains the ribosomal catalytic site termed the peptidyl transferase center (PTC), which catalyzes the formation of peptide bonds, thereby polymerizing the amino acids delivered by tRNAs into a polypeptide chain. The nascent polypeptides leave the ribosome through a tunnel in the LSU and interact with protein factors that function in enzymatic processing, targeting, and the membrane insertion of nascent chains at the exit of the ribosomal tunnel. The chain is Small ribosomal subunit protein uS14 (rps29) from Schizosaccharomyces pombe (strain 972 / ATCC 24843) (Fission yeast).